A 210-amino-acid polypeptide reads, in one-letter code: Peptidyl-tRNA hydrolase (210 aa).

Residue Y14 participates in tRNA binding. Catalysis depends on H19, which acts as the Proton acceptor. Residues F64, N66, and N112 each contribute to the tRNA site.

It belongs to the PTH family. Monomer.

The protein resides in the cytoplasm. It catalyses the reaction an N-acyl-L-alpha-aminoacyl-tRNA + H2O = an N-acyl-L-amino acid + a tRNA + H(+). Hydrolyzes ribosome-free peptidyl-tRNAs (with 1 or more amino acids incorporated), which drop off the ribosome during protein synthesis, or as a result of ribosome stalling. In terms of biological role, catalyzes the release of premature peptidyl moieties from peptidyl-tRNA molecules trapped in stalled 50S ribosomal subunits, and thus maintains levels of free tRNAs and 50S ribosomes. The chain is Peptidyl-tRNA hydrolase from Methylorubrum populi (strain ATCC BAA-705 / NCIMB 13946 / BJ001) (Methylobacterium populi).